The chain runs to 567 residues: Organic cation transporter-like protein (567 aa).

Residues Met1–Tyr21 lie on the Cytoplasmic side of the membrane. A helical transmembrane segment spans residues Phe22–Leu42. Residues Ala43–Asp127 are Extracellular-facing. 4 N-linked (GlcNAc...) asparagine glycosylation sites follow: Asn55, Asn67, Asn89, and Asn97. The helical transmembrane segment at Phe128 to Phe148 threads the bilayer. Topologically, residues Gly149–Lys158 are cytoplasmic. A helical transmembrane segment spans residues Pro159–Pro179. At Glu180–Leu189 the chain is on the extracellular side. The helical transmembrane segment at Met190–Val210 threads the bilayer. The Cytoplasmic portion of the chain corresponds to Gly211 to Gly219. Residues Ile220–Val240 traverse the membrane as a helical segment. Residues His241–Arg244 are Extracellular-facing. A helical membrane pass occupies residues Trp245–Pro265. Residues Glu266–Lys343 lie on the Cytoplasmic side of the membrane. The interval Leu304–Gly326 is disordered. Residues Ser310–Asp320 are compositionally biased toward basic and acidic residues. A helical transmembrane segment spans residues Thr344 to Asn364. At Thr365–Asn371 the chain is on the extracellular side. The helical transmembrane segment at Val372–Leu392 threads the bilayer. The Cytoplasmic segment spans residues Thr393 to Arg400. Residues Ser401 to Pro421 traverse the membrane as a helical segment. The Extracellular portion of the chain corresponds to Gln422–Leu427. Residues Ile428–Ile448 traverse the membrane as a helical segment. The Cytoplasmic segment spans residues Phe449 to Ala462. The helical transmembrane segment at Leu463–Leu483 threads the bilayer. Residues Ala484–Pro489 lie on the Extracellular side of the membrane. A helical transmembrane segment spans residues Leu490–Pro510. Residues Glu511–Lys567 lie on the Cytoplasmic side of the membrane. The interval Pro546 to Lys567 is disordered. Residues Gly555–Lys567 show a composition bias toward polar residues.

The protein belongs to the major facilitator (TC 2.A.1) superfamily. Organic cation transporter (TC 2.A.1.19) family.

Its subcellular location is the membrane. Functionally, probably transports organic cations. In Drosophila melanogaster (Fruit fly), this protein is Organic cation transporter-like protein (Orct2).